Consider the following 172-residue polypeptide: MAKFQPRIADDGRDDGLKEKMIQVNRVTKVVKGGRTMSFAALTVVGDGDGRVGMGKGKAKEVPVAVTKAMDAARRDMVKVSLKNGTVHHNVTGEHGAAKVLLAPAAPGTGIIAGGPMRAVFEVMGVTDIVAKSLGSSNPYNMVRATFNALRRSTTPSEVASKRGKSVEEIFN.

The region spanning 17–80 (LKEKMIQVNR…DAARRDMVKV (64 aa)) is the S5 DRBM domain.

Belongs to the universal ribosomal protein uS5 family. Part of the 30S ribosomal subunit. Contacts proteins S4 and S8.

Its function is as follows. With S4 and S12 plays an important role in translational accuracy. Located at the back of the 30S subunit body where it stabilizes the conformation of the head with respect to the body. This Methylibium petroleiphilum (strain ATCC BAA-1232 / LMG 22953 / PM1) protein is Small ribosomal subunit protein uS5.